Consider the following 295-residue polypeptide: Thioredoxin-related transmembrane protein 2 (295 aa).

A signal peptide spans 1-48; it reads MAVLAPLIALVYSVPRLSRWLARPYCLLSALLSIAFLLVRKLPPICNG. Topologically, residues 49–102 are extracellular; the sequence is LPTQREDGNPCDFDWREVEILMFLSAIVMMKNRRSITVEQHVGNIFMFSKVANA. Residues 103–125 traverse the membrane as a helical segment; it reads ILFFRLDIRMGLLYLTLCIVFLM. The Thioredoxin domain occupies 114-269; it reads LLYLTLCIVF…LYQRAKKHSK (156 aa). Residues 126-295 are Cytoplasmic-facing; the sequence is TCKPPLYMGP…VPDGENKKDK (170 aa). Phosphoserine is present on residues Ser211 and Ser243. A disordered region spans residues 266–295; it reads KHSKGGDMSEEKPVDPAPTTVPDGENKKDK. Residues 269 to 279 are compositionally biased toward basic and acidic residues; it reads KGGDMSEEKPV. Residues 292 to 295 carry the Di-lysine motif motif; that stretch reads KKDK.

Monomer. Homodimer; disulfide-linked. Occurs in both reduced and oxidized monomeric form. Oxidative conditions increase homodimerization. Interacts with CANX. Interacts with ATP2A2.

The protein localises to the endoplasmic reticulum membrane. Its subcellular location is the mitochondrion membrane. Endoplasmic reticulum and mitochondria-associated protein that probably functions as a regulator of cellular redox state and thereby regulates protein post-translational modification, protein folding and mitochondrial activity. Indirectly regulates neuronal proliferation, migration, and organization in the developing brain. This chain is Thioredoxin-related transmembrane protein 2 (Tmx2), found in Mus musculus (Mouse).